Consider the following 357-residue polypeptide: D-alanine--D-alanine ligase A (357 aa).

In terms of domain architecture, ATP-grasp spans 143–348 (KRLLREAGLA…YSKVIDVLIE (206 aa)). ATP is bound at residue 171–226 (AGALGLPFFAKPARQGSSFGVSKVHDRDGFEQAVETALRYDSKALIEEFVDGREIE). Mg(2+) contacts are provided by aspartate 302, glutamate 315, and asparagine 317.

Belongs to the D-alanine--D-alanine ligase family. Requires Mg(2+) as cofactor. It depends on Mn(2+) as a cofactor.

The protein localises to the cytoplasm. It catalyses the reaction 2 D-alanine + ATP = D-alanyl-D-alanine + ADP + phosphate + H(+). It participates in cell wall biogenesis; peptidoglycan biosynthesis. Its function is as follows. Cell wall formation. This is D-alanine--D-alanine ligase A from Mesorhizobium japonicum (strain LMG 29417 / CECT 9101 / MAFF 303099) (Mesorhizobium loti (strain MAFF 303099)).